The primary structure comprises 332 residues: Lipoyl synthase (332 aa).

Residues C74, C79, C85, C100, C104, C107, and S314 each coordinate [4Fe-4S] cluster. The 219-residue stretch at 85–303 (CFGKGTATFM…EEEAYKMGFT (219 aa)) folds into the Radical SAM core domain.

This sequence belongs to the radical SAM superfamily. Lipoyl synthase family. [4Fe-4S] cluster serves as cofactor.

It is found in the cytoplasm. The enzyme catalyses [[Fe-S] cluster scaffold protein carrying a second [4Fe-4S](2+) cluster] + N(6)-octanoyl-L-lysyl-[protein] + 2 oxidized [2Fe-2S]-[ferredoxin] + 2 S-adenosyl-L-methionine + 4 H(+) = [[Fe-S] cluster scaffold protein] + N(6)-[(R)-dihydrolipoyl]-L-lysyl-[protein] + 4 Fe(3+) + 2 hydrogen sulfide + 2 5'-deoxyadenosine + 2 L-methionine + 2 reduced [2Fe-2S]-[ferredoxin]. It functions in the pathway protein modification; protein lipoylation via endogenous pathway; protein N(6)-(lipoyl)lysine from octanoyl-[acyl-carrier-protein]: step 2/2. Catalyzes the radical-mediated insertion of two sulfur atoms into the C-6 and C-8 positions of the octanoyl moiety bound to the lipoyl domains of lipoate-dependent enzymes, thereby converting the octanoylated domains into lipoylated derivatives. This Paracidovorax citrulli (strain AAC00-1) (Acidovorax citrulli) protein is Lipoyl synthase.